Consider the following 578-residue polypeptide: MCGILAVLGCIDNSQAKRSRIIELSRRLRHRGPDWSGLHCYEDCYLAHERLAIIDPTSGDQPLYNEDKTVAVTVNGEIYNHKILREKLKSHQFRTGSDCEVIAHLYEEHGEEFIDMLDGMFAFVLLDTRDKSFIAARDAIGITPLYIGWGLDGSVWFASEMKALSDDCEQFMSFPPGHIYSSKQGGLRRWYNPPWYNEQVPSTPYDPLVLRNAFEKAVIKRLMTDVPFGVLLSGGLDSSLVAAVALRHLEKSEAARQWGSQLHTFCIGLQGSPDLKAGREVADYLGTRHHEFQFTVQDGIDAIEEVIYHIETYDVTTIRASTPMFLMSRKIKSLGVKMVLSGEGSDEILGGYLYFHKAPNKKEFHEETCRKIKALHQFDCLRANKSTSAWGVEARVPFLDKEFLNVAMSIDPEWKLIKPDLGRIEKWVLRNAFDDEERPYLPKHILYRQKEQFSDGVGYSWIDGLKDHANKHVSDTMLSNASFVFPDNTPLTKEAYYYRTIFEKFFPKSAARATVPGGPSIACSTAKAVEWDATWSKNLDPSGRAALGVHVAAYEEDKAAAAAKAGSDLVDPLPKNGT.

Cysteine 2 serves as the catalytic For GATase activity. The region spanning 2–185 (CGILAVLGCI…PGHIYSSKQG (184 aa)) is the Glutamine amidotransferase type-2 domain. L-glutamine is bound by residues 50-54 (RLAII), 75-77 (NGE), and aspartate 98. The Asparagine synthetase domain maps to 210–450 (LRNAFEKAVI…LPKHILYRQK (241 aa)). Residues leucine 231, isoleucine 267, and 341-342 (SG) each bind ATP.

Expressed in the vascular region adjacent to leaf mesophyll cells in the companion cell-sieve tube element complex.

It carries out the reaction L-aspartate + L-glutamine + ATP + H2O = L-asparagine + L-glutamate + AMP + diphosphate + H(+). The protein operates within amino-acid biosynthesis; L-asparagine biosynthesis. Its function is as follows. Essential for nitrogen assimilation, distribution and remobilization within the plant via the phloem. The polypeptide is Asparagine synthetase [glutamine-hydrolyzing] 2 (ASN2) (Arabidopsis thaliana (Mouse-ear cress)).